Here is a 436-residue protein sequence, read N- to C-terminus: N-lysine methyltransferase SMYD2 (436 aa).

The SET domain occupies 10-244 (GGLERFASPG…PGEEVFTSYI (235 aa)). An S-adenosyl-L-methionine-binding site is contributed by 20-22 (KGR). Zn(2+)-binding residues include cysteine 55, cysteine 58, cysteine 68, cysteine 71, cysteine 77, cysteine 81, histidine 89, and cysteine 93. The segment at 55-93 (CDGCFARKEGLSKCGRCKQAFYCNVECQKEDWPMHKLEC) adopts an MYND-type zinc-finger fold. S-adenosyl-L-methionine is bound by residues histidine 140, 209 to 210 (NH), and 261 to 263 (YFF).

Belongs to the class V-like SAM-binding methyltransferase superfamily.

The protein localises to the cytoplasm. It localises to the cytosol. It is found in the nucleus. The catalysed reaction is L-lysyl(4)-[histone H3] + 3 S-adenosyl-L-methionine = N(6),N(6),N(6)-trimethyl-L-lysyl(4)-[histone H3] + 3 S-adenosyl-L-homocysteine + 3 H(+). It catalyses the reaction L-lysyl-[protein] + S-adenosyl-L-methionine = N(6)-methyl-L-lysyl-[protein] + S-adenosyl-L-homocysteine + H(+). Its function is as follows. Protein-lysine N-methyltransferase that methylates both histones and non-histone proteins, including p53/TP53 and RB1. Specifically trimethylates histone H3 'Lys-4' (H3K4me3) in vivo. The activity requires interaction with HSP90alpha. Shows even higher methyltransferase activity on p53/TP53. Monomethylates 'Lys-370' of p53/TP53, leading to decreased DNA-binding activity and subsequent transcriptional regulation activity of p53/TP53. Monomethylates RB1 at 'Lys-860'. In Gallus gallus (Chicken), this protein is N-lysine methyltransferase SMYD2 (SMYD2).